The following is a 310-amino-acid chain: Ribosomal protein uL3 glutamine methyltransferase (310 aa).

It belongs to the protein N5-glutamine methyltransferase family. PrmB subfamily.

The enzyme catalyses L-glutaminyl-[ribosomal protein uL3] + S-adenosyl-L-methionine = N(5)-methyl-L-glutaminyl-[ribosomal protein uL3] + S-adenosyl-L-homocysteine + H(+). In terms of biological role, specifically methylates large ribosomal subunit protein uL3 on 'Gln-150'. In Salmonella typhi, this protein is Ribosomal protein uL3 glutamine methyltransferase.